Here is a 562-residue protein sequence, read N- to C-terminus: Oxygen-dependent choline dehydrogenase (562 aa).

4–33 is a binding site for FAD; it reads DYIIIGAGSAGNVLATRLTEDPNTTVLLLE. The active-site Proton acceptor is the His-473.

It belongs to the GMC oxidoreductase family. The cofactor is FAD.

The catalysed reaction is choline + A = betaine aldehyde + AH2. It catalyses the reaction betaine aldehyde + NAD(+) + H2O = glycine betaine + NADH + 2 H(+). The protein operates within amine and polyamine biosynthesis; betaine biosynthesis via choline pathway; betaine aldehyde from choline (cytochrome c reductase route): step 1/1. Its function is as follows. Involved in the biosynthesis of the osmoprotectant glycine betaine. Catalyzes the oxidation of choline to betaine aldehyde and betaine aldehyde to glycine betaine at the same rate. The sequence is that of Oxygen-dependent choline dehydrogenase from Escherichia coli (strain SMS-3-5 / SECEC).